Consider the following 213-residue polypeptide: Ribonuclease Oy (213 aa).

Histidine 35 is an active-site residue. Cysteine 51 and cysteine 96 are oxidised to a cystine. Asparagine 52 carries an N-linked (GlcNAc...) asparagine glycan. Catalysis depends on residues glutamate 89 and histidine 93. Residues asparagine 121 and asparagine 142 are each glycosylated (N-linked (GlcNAc...) asparagine). 2 disulfide bridges follow: cysteine 160–cysteine 198 and cysteine 178–cysteine 188.

This sequence belongs to the RNase T2 family.

It localises to the secreted. In terms of biological role, releases mononucleotides from RNA in the order of 3'-GMP, 3'-AMP and 3'-UMP. This is Ribonuclease Oy from Magallana gigas (Pacific oyster).